The sequence spans 1198 residues: DNA polymerase (1198 aa).

Disordered regions lie at residues 1–90, 179–198, and 906–931; these read MALV…TVVA, LEQP…QPNP, and ALAD…PSGT. Positions 30-40 are enriched in low complexity; the sequence is QQPPRAAPAPA.

This sequence belongs to the DNA polymerase type-B family. In terms of assembly, heterodimer with the terminal protein; this heterodimer binds to bp 9 to 18 of the genome. Forms a complex with viral pTP, DBP and hosts NFIA and POU2F1/OCT1 for initiation of replication.

It is found in the host nucleus. The enzyme catalyses DNA(n) + a 2'-deoxyribonucleoside 5'-triphosphate = DNA(n+1) + diphosphate. Its function is as follows. Eukaryotic-type DNA polymerase involved in viral genomic replication. DNA synthesis is protein primed, and acts in a strand displacement replication. Assembles in complex with viral pTP, DBP, host NFIA and host POU2F1/OCT1 on viral origin of replication. The polymerase covalently transfers dCMP onto pTP, thereby initiating complementary strand synthesis. In Homo sapiens (Human), this protein is DNA polymerase.